The following is a 612-amino-acid chain: DEAD-box ATP-dependent RNA helicase 11 (612 aa).

Disordered regions lie at residues 1–70 (MSAS…SGGG) and 83–104 (GAGG…WDRR). Position 2 is an N-acetylserine (S2). Composition is skewed to gly residues over residues 61 to 70 (SGGGGASGGG) and 83 to 94 (GAGGGGGGGGGW). Residues 151 to 179 (NTFADIDLGDALNLNIRRCKYVRPTPVQR) carry the Q motif motif. The 185-residue stretch at 182-366 (IPILLAERDL…ADFMSNYIFL (185 aa)) folds into the Helicase ATP-binding domain. 195 to 202 (AQTGSGKT) contacts ATP. Residues 310 to 313 (DEAD) carry the DEAD box motif. One can recognise a Helicase C-terminal domain in the interval 377 to 542 (LITQRVEFVQ…EVPEWLTRYA (166 aa)). The disordered stretch occupies residues 547–583 (FGGGKKRSGGRFGGRDFRREGSYSRGGGGGGGGGGSD). Residues 559–568 (GGRDFRREGS) are compositionally biased toward basic and acidic residues. The segment covering 570–583 (SRGGGGGGGGGGSD) has biased composition (gly residues).

This sequence belongs to the DEAD box helicase family. DDX3/DED1 subfamily.

It carries out the reaction ATP + H2O = ADP + phosphate + H(+). In Arabidopsis thaliana (Mouse-ear cress), this protein is DEAD-box ATP-dependent RNA helicase 11 (RH11).